The sequence spans 216 residues: Large ribosomal subunit protein uL1A (216 aa).

A phosphoserine mark is found at Ser-85 and Ser-128.

It belongs to the universal ribosomal protein uL1 family. Component of the large ribosomal subunit (LSU). Mature yeast ribosomes consist of a small (40S) and a large (60S) subunit. The 40S small subunit contains 1 molecule of ribosomal RNA (18S rRNA) and at least 33 different proteins. The large 60S subunit contains 3 rRNA molecules (25S, 5.8S and 5S rRNA) and at least 46 different proteins. uL1 forms part of the L1 stalk.

The protein resides in the cytoplasm. Its function is as follows. Component of the ribosome, a large ribonucleoprotein complex responsible for the synthesis of proteins in the cell. The small ribosomal subunit (SSU) binds messenger RNAs (mRNAs) and translates the encoded message by selecting cognate aminoacyl-transfer RNA (tRNA) molecules. The large subunit (LSU) contains the ribosomal catalytic site termed the peptidyl transferase center (PTC), which catalyzes the formation of peptide bonds, thereby polymerizing the amino acids delivered by tRNAs into a polypeptide chain. The nascent polypeptides leave the ribosome through a tunnel in the LSU and interact with protein factors that function in enzymatic processing, targeting, and the membrane insertion of nascent chains at the exit of the ribosomal tunnel. uL1 forms part of the L1 stalk, a mobile element that plays a role in evacuating the exit-site tRNA. The sequence is that of Large ribosomal subunit protein uL1A (rpl102) from Schizosaccharomyces pombe (strain 972 / ATCC 24843) (Fission yeast).